The chain runs to 422 residues: Nuclear hormone receptor family member nhr-54 (422 aa).

The segment at residues 14–92 is a DNA-binding region (nuclear receptor); it reads SVKCAICYKA…LGMTTENVRT (79 aa). 2 NR C4-type zinc fingers span residues 17 to 37 and 53 to 80; these read CAIC…CRAC and CTRK…FKKC. The 262-residue stretch at 161–422 folds into the NR LBD domain; sequence PDDDVIVELN…VFTEPEFFRV (262 aa).

Belongs to the nuclear hormone receptor family.

The protein resides in the nucleus. In terms of biological role, orphan nuclear receptor. This chain is Nuclear hormone receptor family member nhr-54 (nhr-54), found in Caenorhabditis elegans.